A 293-amino-acid polypeptide reads, in one-letter code: uncharacterized protein (293 aa).

Disordered regions lie at residues 1–23 (MGWPPAQKPEDSKEEHGGPAQTD) and 52–83 (ELQSYSHTSESPVETKTPTTSSEEQDEQSELS). Over residues 8–17 (KPEDSKEEHG) the composition is skewed to basic and acidic residues. Over residues 52–71 (ELQSYSHTSESPVETKTPTT) the composition is skewed to polar residues.

This is an uncharacterized protein from Mus musculus (Mouse).